The primary structure comprises 288 residues: Alpha/beta hydrolase domain-containing protein 17B (288 aa).

Residues Ser170, Asp235, and His264 each act as charge relay system in the active site. Ser282 is modified (phosphoserine).

The protein belongs to the AB hydrolase superfamily. ABHD17 family. Post-translationally, palmitoylated on cysteine residues located in a cysteine cluster at the N-terminus which promotes membrane localization. Palmitoylation is required for post-synaptic localization and for depalmitoylating activity towards DLG4/PSD95.

The protein localises to the cell membrane. Its subcellular location is the recycling endosome membrane. The protein resides in the cell projection. It is found in the dendritic spine. It localises to the postsynaptic density membrane. The catalysed reaction is S-hexadecanoyl-L-cysteinyl-[protein] + H2O = L-cysteinyl-[protein] + hexadecanoate + H(+). With respect to regulation, inhibited by palmostatin-B. Its function is as follows. Hydrolyzes fatty acids from S-acylated cysteine residues in proteins. Has depalmitoylating activity towards DLG4/PSD95. Has depalmitoylating activity towards GAP43. Has depalmitoylating activity towards MAP6. Has depalmitoylating activity towards NRAS. The chain is Alpha/beta hydrolase domain-containing protein 17B from Homo sapiens (Human).